The chain runs to 148 residues: uncharacterized protein (148 aa).

This is an uncharacterized protein from Bacillus subtilis (strain 168).